The primary structure comprises 1061 residues: Error-prone DNA polymerase (1061 aa).

Belongs to the DNA polymerase type-C family. DnaE2 subfamily.

The protein resides in the cytoplasm. It catalyses the reaction DNA(n) + a 2'-deoxyribonucleoside 5'-triphosphate = DNA(n+1) + diphosphate. Its function is as follows. DNA polymerase involved in damage-induced mutagenesis and translesion synthesis (TLS). It is not the major replicative DNA polymerase. The sequence is that of Error-prone DNA polymerase from Bdellovibrio bacteriovorus (strain ATCC 15356 / DSM 50701 / NCIMB 9529 / HD100).